The sequence spans 263 residues: Proteasome subunit alpha type-1 (263 aa).

The residue at position 1 (methionine 1) is an N-acetylmethionine. The residue at position 110 (serine 110) is a Phosphoserine; alternate. Residue serine 110 is glycosylated (O-linked (GlcNAc) serine; alternate). Residue lysine 115 forms a Glycyl lysine isopeptide (Lys-Gly) (interchain with G-Cter in ubiquitin) linkage. Position 177 is a phosphoserine (serine 177). Lysine 208 is covalently cross-linked (Glycyl lysine isopeptide (Lys-Gly) (interchain with G-Cter in ubiquitin)). Residues 232–263 (FLDGLEERPQRKAQPSQAAEEPAEKADEPMEH) form a disordered region. A compositionally biased stretch (basic and acidic residues) spans 253-263 (PAEKADEPMEH).

The protein belongs to the peptidase T1A family. As to quaternary structure, the 26S proteasome consists of a 20S proteasome core and two 19S regulatory subunits. The 20S proteasome core is a barrel-shaped complex made of 28 subunits that are arranged in four stacked rings. The two outer rings are each formed by seven alpha subunits, and the two inner rings are formed by seven beta subunits. The proteolytic activity is exerted by three beta-subunits PSMB5, PSMB6 and PSMB7. Interacts with NOTCH3. Interacts with ZFAND1. Post-translationally, C-terminal extension is partially cleaved off by limited proteolysis leading to a conversion of the proteasome from its latent into its active form. Detected in liver (at protein level).

The protein localises to the cytoplasm. It is found in the nucleus. Component of the 20S core proteasome complex involved in the proteolytic degradation of most intracellular proteins. This complex plays numerous essential roles within the cell by associating with different regulatory particles. Associated with two 19S regulatory particles, forms the 26S proteasome and thus participates in the ATP-dependent degradation of ubiquitinated proteins. The 26S proteasome plays a key role in the maintenance of protein homeostasis by removing misfolded or damaged proteins that could impair cellular functions, and by removing proteins whose functions are no longer required. Associated with the PA200 or PA28, the 20S proteasome mediates ubiquitin-independent protein degradation. This type of proteolysis is required in several pathways including spermatogenesis (20S-PA200 complex) or generation of a subset of MHC class I-presented antigenic peptides (20S-PA28 complex). This is Proteasome subunit alpha type-1 (Psma1) from Mus musculus (Mouse).